We begin with the raw amino-acid sequence, 384 residues long: Deoxyguanosinetriphosphate triphosphohydrolase-like protein (384 aa).

The HD domain occupies 62-198 (RLTHSLEVST…AALADDISYI (137 aa)).

Belongs to the dGTPase family. Type 2 subfamily.

The polypeptide is Deoxyguanosinetriphosphate triphosphohydrolase-like protein (Rickettsia peacockii (strain Rustic)).